The primary structure comprises 302 residues: Vacuolar protein sorting-associated protein 26A (302 aa).

The protein belongs to the VPS26 family. As to quaternary structure, component of the retromer complex which consists of VPS29 (MAG1), VPS26 (VPS26A or VPS26B), VPS35 (VPS35A or VPS35B or VPS35C), VPS5/17 (SNX1 or SNX2A or SNX2B). Component of a retromer subcomplex consisting of VPS29 (MAG1), VPS26 (VPS26A or VPS26B), VPS35 (VPS35A or VPS35B or VPS35C).

It is found in the cytoplasm. Its subcellular location is the endosome membrane. The protein resides in the prevacuolar compartment membrane. The protein localises to the golgi apparatus. It localises to the trans-Golgi network membrane. Plays a role in vesicular protein sorting. Component of the membrane-associated retromer complex which is essential in endosome-to-Golgi retrograde transport. The VPS29-VPS26-VPS35 subcomplex may be involved in recycling of specific cargos from endosome to the plasma membrane. This Arabidopsis thaliana (Mouse-ear cress) protein is Vacuolar protein sorting-associated protein 26A (VPS26A).